The primary structure comprises 381 residues: Alkanesulfonate monooxygenase (381 aa).

This sequence belongs to the SsuD family. In terms of assembly, homotetramer.

The enzyme catalyses an alkanesulfonate + FMNH2 + O2 = an aldehyde + FMN + sulfite + H2O + 2 H(+). Functionally, catalyzes the desulfonation of aliphatic sulfonates. This Escherichia coli O17:K52:H18 (strain UMN026 / ExPEC) protein is Alkanesulfonate monooxygenase.